The following is a 353-amino-acid chain: E3 ubiquitin-protein ligase Os03g0188200 (353 aa).

A helical transmembrane segment spans residues 48-68; that stretch reads VVVLVALITAFVLLTVFSVLI. The RING-type; atypical zinc-finger motif lies at 133-175; the sequence is CAVCLAEFADSDELRVLPACCHVFHPDCIDPWLAAAVTCPLCR. 2 stretches are compositionally biased toward basic and acidic residues: residues 308–318 and 340–353; these read ADWDAGEEHGG and GSKE…LNRV. Residues 308–353 are disordered; the sequence is ADWDAGEEHGGSKRVHPVAGAQDETPSGSGSDGSKENSDSDALNRV.

Its subcellular location is the membrane. The enzyme catalyses S-ubiquitinyl-[E2 ubiquitin-conjugating enzyme]-L-cysteine + [acceptor protein]-L-lysine = [E2 ubiquitin-conjugating enzyme]-L-cysteine + N(6)-ubiquitinyl-[acceptor protein]-L-lysine.. It functions in the pathway protein modification; protein ubiquitination. In terms of biological role, possesses E3 ubiquitin-protein ligase in vitro. This Oryza sativa subsp. japonica (Rice) protein is E3 ubiquitin-protein ligase Os03g0188200.